Reading from the N-terminus, the 135-residue chain is D-ribose pyranase (135 aa).

His-20 acts as the Proton donor in catalysis. Substrate contacts are provided by residues Asp-28, His-102, and 124-126 (YSN).

Belongs to the RbsD / FucU family. RbsD subfamily. As to quaternary structure, homodecamer.

It is found in the cytoplasm. The catalysed reaction is beta-D-ribopyranose = beta-D-ribofuranose. It functions in the pathway carbohydrate metabolism; D-ribose degradation; D-ribose 5-phosphate from beta-D-ribopyranose: step 1/2. Functionally, catalyzes the interconversion of beta-pyran and beta-furan forms of D-ribose. This chain is D-ribose pyranase, found in Thermotoga petrophila (strain ATCC BAA-488 / DSM 13995 / JCM 10881 / RKU-1).